The primary structure comprises 122 residues: Large ribosomal subunit protein uL14c (122 aa).

The protein belongs to the universal ribosomal protein uL14 family. As to quaternary structure, part of the 50S ribosomal subunit.

It localises to the plastid. The protein resides in the chloroplast. Its function is as follows. Binds to 23S rRNA. The sequence is that of Large ribosomal subunit protein uL14c from Carica papaya (Papaya).